The chain runs to 1658 residues: Cortactin-binding protein 2 (1658 aa).

5 disordered regions span residues Met1–Ala24, Lys203–Asp235, Gly348–Gly437, Gly451–Ser475, and Arg495–Pro612. Positions Arg119 to Lys276 form a coiled coil. Positions Ser214 to Asp235 are enriched in basic and acidic residues. Positions Gly385 to Thr394 are enriched in low complexity. The span at Asn399–Gln418 shows a compositional bias: polar residues. Arg495 is subject to Asymmetric dimethylarginine. The segment covering Ala509–Pro520 has biased composition (low complexity). Positions Thr580 to Gln590 are enriched in polar residues. ANK repeat units lie at residues Gly706 to Tyr736, Asp740 to Ala769, Asn773 to His802, Glu806 to Val835, Asp839 to Arg868, and Glu909 to Arg939. Residues Glu1448–Glu1478 form a disordered region. Ser1521 bears the Phosphoserine mark. Disordered stretches follow at residues Arg1538–Ser1595 and Pro1611–Glu1642. The segment covering Ser1539–Gly1558 has biased composition (basic and acidic residues). 2 stretches are compositionally biased toward polar residues: residues Ser1559–Asn1569 and Pro1581–Ser1595. A compositionally biased stretch (low complexity) spans Ser1619 to Gln1633.

As to quaternary structure, interacts with CTTN/cortactin SH3 domain. Interacts with STRN, STRN4/zinedin and MOB4/phocein; this interactions mediate the association with the STRIPAK core complex and may regulate dendritic spine distribution of the STRIPAK complex in hippocampal neurons. Activation of glutamate receptors weakens the interaction with STRN and STRN4.

It localises to the cytoplasm. The protein localises to the cell cortex. The protein resides in the cell projection. It is found in the dendritic spine. Its function is as follows. Regulates the dendritic spine distribution of CTTN/cortactin in hippocampal neurons, and thus controls dendritic spinogenesis and dendritic spine maintenance. Associates with the striatin-interacting phosphatase and kinase (STRIPAK) core complex to regulate dendritic spine distribution of the STRIPAK complex in hippocampal neurons. The protein is Cortactin-binding protein 2 (CTTNBP2) of Neofelis nebulosa (Clouded leopard).